The chain runs to 460 residues: Argininosuccinate lyase (460 aa).

This sequence belongs to the lyase 1 family. Argininosuccinate lyase subfamily.

Its subcellular location is the cytoplasm. It carries out the reaction 2-(N(omega)-L-arginino)succinate = fumarate + L-arginine. The protein operates within amino-acid biosynthesis; L-arginine biosynthesis; L-arginine from L-ornithine and carbamoyl phosphate: step 3/3. The sequence is that of Argininosuccinate lyase from Lacticaseibacillus paracasei (strain ATCC 334 / BCRC 17002 / CCUG 31169 / CIP 107868 / KCTC 3260 / NRRL B-441) (Lactobacillus paracasei).